Reading from the N-terminus, the 1085-residue chain is Solute carrier family 12 member 4 (1085 aa).

The Cytoplasmic portion of the chain corresponds to 1 to 119; that stretch reads MPHFTVVPVD…RRAAKAPSMG (119 aa). 4 positions are modified to phosphoserine: S24, S47, S81, and S88. A discontinuously helical transmembrane segment spans residues 120–141; sequence TLMGVYLPCLQNIFGVILFLRL. 2 residues coordinate K(+): N131 and I132. The Extracellular portion of the chain corresponds to 142–149; the sequence is TWMVGTAG. Residues 150–172 form a helical membrane-spanning segment; the sequence is VLQALLIVLICCCCTLLTAISMS. Residues 173–196 lie on the Cytoplasmic side of the membrane; the sequence is AIATNGVVPAGGSYFMISRSLGPE. A helical membrane pass occupies residues 197–225; it reads FGGAVGLCFYLGTTFAAAMYILGAIEILL. A K(+)-binding site is contributed by Y216. Residues 226–248 are Extracellular-facing; the sequence is TYIAPPAAIFYPSGTHDMSSATL. 2 helical membrane passes run 249-271 and 272-297; these read NNMRVYGTIFLTLMTLVVFVGVK and YVNKFASLFLACVIISILSIYAGGIK. Residues 298 to 419 are Extracellular-facing; sequence SIFDPPVFPV…LYVVADIATS (122 aa). C308 and C323 are oxidised to a cystine. 3 N-linked (GlcNAc...) asparagine glycosylation sites follow: N312, N331, and N347. A disulfide bond links C343 and C353. A helical membrane pass occupies residues 420-440; the sequence is FTVLVGIFFPSVTGIMAGSNR. P429 and T432 together coordinate K(+). 3 residues coordinate chloride: G433, I434, and M435. Over 441–450 the chain is Cytoplasmic; sequence SGDLRDAQKS. Residues 451–473 traverse the membrane as a helical segment; sequence IPVGTILAIVTTSLVYFSSVILF. Over 474-504 the chain is Extracellular; it reads GACIEGVVLRDKYGDGVSRNLVVGTLAWPSP. Residues 505-531 form a helical membrane-spanning segment; the sequence is WVIVVGSFFSTCGAGLQSLTGAPRLLQ. At 532 to 554 the chain is on the cytoplasmic side; it reads AIAKDNIIPFLRVFGHGKANGEP. Helical transmembrane passes span 555–575 and 576–598; these read TWALLLTALIAELGILIASLD and MVAPILSMFFLMCYLFVNLACAV. Residue Y589 participates in chloride binding. At 599 to 612 the chain is on the cytoplasmic side; sequence QTLLRTPNWRPRFK. The next 2 membrane-spanning stretches (helical) occupy residues 613-635 and 636-651; these read YYHWTLSFLGMSLCLALMFVSSW and YYALVAMLIAGMIYKY. At 652–1085 the chain is on the cytoplasmic side; it reads IEYQGAEKEW…GGREVITIYS (434 aa). Positions 665–681 are scissor helix; the sequence is IRGLSLSAARYALLRLE. The ATP site is built by L697, K699, K707, Y708, and V730. S734 is modified (phosphoserine). ATP contacts are provided by G794, W795, and Y797. Residues S916 and S967 each carry the phosphoserine modification. T983 carries the post-translational modification Phosphothreonine. Residue S1050 is modified to Phosphoserine.

It belongs to the SLC12A transporter family. K/Cl co-transporter subfamily. In terms of assembly, homodimer; adopts a domain-swap conformation at the scissor helices connecting the transmembrane domain and C-terminal domain. Heterodimer with other K-Cl cotransporters. Phosphorylated, phosphorylation may regulate transporter activity. As to expression, detected in embryo, adult heart, erythrocytes, brain, kidney, stomach, ovary, testis and liver.

Its subcellular location is the cell membrane. The catalysed reaction is K(+)(in) + chloride(in) = K(+)(out) + chloride(out). Inhibited by WNK3. Its function is as follows. Mediates electroneutral potassium-chloride cotransport when activated by cell swelling. May contribute to cell volume homeostasis in single cells. May be involved in the regulation of basolateral Cl(-) exit in NaCl absorbing epithelia. The polypeptide is Solute carrier family 12 member 4 (Slc12a4) (Mus musculus (Mouse)).